We begin with the raw amino-acid sequence, 185 residues long: Large ribosomal subunit protein bL25 (185 aa).

This sequence belongs to the bacterial ribosomal protein bL25 family. CTC subfamily. As to quaternary structure, part of the 50S ribosomal subunit; part of the 5S rRNA/L5/L18/L25 subcomplex. Contacts the 5S rRNA. Binds to the 5S rRNA independently of L5 and L18.

Its function is as follows. This is one of the proteins that binds to the 5S RNA in the ribosome where it forms part of the central protuberance. This is Large ribosomal subunit protein bL25 from Chlamydia trachomatis serovar L2 (strain ATCC VR-902B / DSM 19102 / 434/Bu).